A 525-amino-acid polypeptide reads, in one-letter code: Lysine--tRNA ligase (525 aa).

Positions 40–48 (ASGIPHMGS) match the 'HIGH' region motif. A 'KMSKS' region motif is present at residues 295–299 (KISKS). K298 is an ATP binding site.

It belongs to the class-I aminoacyl-tRNA synthetase family.

The protein resides in the cytoplasm. The catalysed reaction is tRNA(Lys) + L-lysine + ATP = L-lysyl-tRNA(Lys) + AMP + diphosphate. The sequence is that of Lysine--tRNA ligase (lysS) from Cenarchaeum symbiosum (strain A).